The sequence spans 237 residues: Sugar fermentation stimulation protein homolog (237 aa).

This sequence belongs to the SfsA family.

In Methylobacterium radiotolerans (strain ATCC 27329 / DSM 1819 / JCM 2831 / NBRC 15690 / NCIMB 10815 / 0-1), this protein is Sugar fermentation stimulation protein homolog.